Here is a 136-residue protein sequence, read N- to C-terminus: Large ribosomal subunit protein bL17 (136 aa).

The protein belongs to the bacterial ribosomal protein bL17 family. Part of the 50S ribosomal subunit. Contacts protein L32.

This Rickettsia prowazekii (strain Madrid E) protein is Large ribosomal subunit protein bL17.